A 232-amino-acid polypeptide reads, in one-letter code: Flagellar L-ring protein (232 aa).

An N-terminal signal peptide occupies residues 1–15; it reads MKKVLFYVLPFAFFG. Cys-16 carries the N-palmitoyl cysteine lipid modification. Cys-16 is lipidated: S-diacylglycerol cysteine.

It belongs to the FlgH family. As to quaternary structure, the basal body constitutes a major portion of the flagellar organelle and consists of four rings (L,P,S, and M) mounted on a central rod.

Its subcellular location is the cell outer membrane. It localises to the bacterial flagellum basal body. In terms of biological role, assembles around the rod to form the L-ring and probably protects the motor/basal body from shearing forces during rotation. This chain is Flagellar L-ring protein, found in Campylobacter jejuni subsp. jejuni serotype O:23/36 (strain 81-176).